The following is a 518-amino-acid chain: Membrane-bound lytic murein transglycosylase F (518 aa).

An N-terminal signal peptide occupies residues 1 to 21 (MKKLKINYLFIGILALLLAVA). Residues 22–269 (LWPSIPWFGK…RIEEKYLGHG (248 aa)) are non-LT domain. The tract at residues 270 to 518 (DDFDYVDTRT…SRKGSEEKQN (249 aa)) is LT domain. Glu-314 is a catalytic residue.

It in the N-terminal section; belongs to the bacterial solute-binding protein 3 family. This sequence in the C-terminal section; belongs to the transglycosylase Slt family.

The protein localises to the cell outer membrane. The catalysed reaction is Exolytic cleavage of the (1-&gt;4)-beta-glycosidic linkage between N-acetylmuramic acid (MurNAc) and N-acetylglucosamine (GlcNAc) residues in peptidoglycan, from either the reducing or the non-reducing ends of the peptidoglycan chains, with concomitant formation of a 1,6-anhydrobond in the MurNAc residue.. Functionally, murein-degrading enzyme that degrades murein glycan strands and insoluble, high-molecular weight murein sacculi, with the concomitant formation of a 1,6-anhydromuramoyl product. Lytic transglycosylases (LTs) play an integral role in the metabolism of the peptidoglycan (PG) sacculus. Their lytic action creates space within the PG sacculus to allow for its expansion as well as for the insertion of various structures such as secretion systems and flagella. This chain is Membrane-bound lytic murein transglycosylase F, found in Shigella sonnei (strain Ss046).